The primary structure comprises 142 residues: Small ribosomal subunit protein uS12 (142 aa).

The segment at 1-30 (MGKTHGMGAARKLKSHRRTQRWADKSYKKS) is disordered. Basic residues predominate over residues 11–20 (RKLKSHRRTQ). Basic and acidic residues predominate over residues 21-30 (RWADKSYKKS). A Hydroxyproline modification is found at Pro-61.

Belongs to the universal ribosomal protein uS12 family.

The polypeptide is Small ribosomal subunit protein uS12 (RPS23) (Euphorbia esula (Leafy spurge)).